A 264-amino-acid chain; its full sequence is S-adenosylmethionine decarboxylase proenzyme (264 aa).

Residue serine 112 is the Schiff-base intermediate with substrate; via pyruvic acid of the active site. Serine 112 is subject to Pyruvic acid (Ser); by autocatalysis. Histidine 117 functions as the Proton acceptor; for processing activity in the catalytic mechanism. Cysteine 140 acts as the Proton donor; for catalytic activity in catalysis.

The protein belongs to the prokaryotic AdoMetDC family. Type 2 subfamily. Heterooctamer of four alpha and four beta chains arranged as a tetramer of alpha/beta heterodimers. The cofactor is pyruvate. Is synthesized initially as an inactive proenzyme. Formation of the active enzyme involves a self-maturation process in which the active site pyruvoyl group is generated from an internal serine residue via an autocatalytic post-translational modification. Two non-identical subunits are generated from the proenzyme in this reaction, and the pyruvate is formed at the N-terminus of the alpha chain, which is derived from the carboxyl end of the proenzyme. The post-translation cleavage follows an unusual pathway, termed non-hydrolytic serinolysis, in which the side chain hydroxyl group of the serine supplies its oxygen atom to form the C-terminus of the beta chain, while the remainder of the serine residue undergoes an oxidative deamination to produce ammonia and the pyruvoyl group blocking the N-terminus of the alpha chain.

The catalysed reaction is S-adenosyl-L-methionine + H(+) = S-adenosyl 3-(methylsulfanyl)propylamine + CO2. Its pathway is amine and polyamine biosynthesis; S-adenosylmethioninamine biosynthesis; S-adenosylmethioninamine from S-adenosyl-L-methionine: step 1/1. Its function is as follows. Catalyzes the decarboxylation of S-adenosylmethionine to S-adenosylmethioninamine (dcAdoMet), the propylamine donor required for the synthesis of the polyamines spermine and spermidine from the diamine putrescine. The protein is S-adenosylmethionine decarboxylase proenzyme of Cronobacter sakazakii (strain ATCC BAA-894) (Enterobacter sakazakii).